A 375-amino-acid chain; its full sequence is CCN family member 1 (375 aa).

Positions 1 to 22 are cleaved as a signal peptide; that stretch reads MGSAGARPALAAALLCLARLAL. The 72-residue stretch at 23 to 94 folds into the IGFBP N-terminal domain; it reads GSPCPAVCQC…AATNGICRAQ (72 aa). 6 disulfides stabilise this stretch: Cys26–Cys50, Cys30–Cys52, Cys32–Cys53, Cys39–Cys56, Cys64–Cys78, and Cys70–Cys91. Residues 98–164 enclose the VWFC domain; sequence RPCEYNSKIY…GQCCEEWVCD (67 aa). The TSP type-1 domain occupies 223–268; sequence KCIVQTTSWSQCSKTCGTGISTRVTNDNPDCKLIKETRICEVRPCG. Residues 274–310 form a heparin-binding region; sequence SLKKGKKCTKTKKSPSPVRFTYAGCSSVKKYRPKYCG. Intrachain disulfides connect Cys281/Cys318, Cys298/Cys332, Cys309/Cys348, Cys312/Cys350, and Cys317/Cys354. Residues 281–355 form the CTCK domain; it reads CTKTKKSPSP…QSCRCNYNCP (75 aa).

This sequence belongs to the CCN family.

It is found in the secreted. In terms of biological role, probable secreted regulatory protein. The protein is CCN family member 1 (CCN1) of Gallus gallus (Chicken).